The following is a 257-amino-acid chain: A-factor type gamma-butyrolactone 1'-reductase (1S-forming) (257 aa).

The active-site Proton acceptor is the Tyr-161.

Belongs to the short-chain dehydrogenases/reductases (SDR) family. As to quaternary structure, homodimer.

It catalyses the reaction a (3R,4R)-3-[(1S)-1-hydroxyalkyl]-4-(hydroxymethyl)oxolan-2-one + NADP(+) = a (3R,4R)-3-alkanoyl-4-(hydroxymethyl)oxolan-2-one + NADPH + H(+). Functionally, involved in the biosynthesis of virginiae butanolide (VB), which regulates the production of antibiotic virginiamycin. Catalyzes the reduction of 6-dehydro-VB-A to VB-A, the last catalytic step in VB biosynthesis. In vitro, can use various synthetic A-factor-type analogs. In Streptomyces virginiae (Streptomyces cinnamonensis), this protein is A-factor type gamma-butyrolactone 1'-reductase (1S-forming).